Reading from the N-terminus, the 480-residue chain is Ribosomal RNA small subunit methyltransferase F (480 aa).

S-adenosyl-L-methionine-binding positions include 125-131 (AAAPGSK), Glu149, Asp176, and Asp194. Cys247 serves as the catalytic Nucleophile.

The protein belongs to the class I-like SAM-binding methyltransferase superfamily. RsmB/NOP family.

Its subcellular location is the cytoplasm. It carries out the reaction cytidine(1407) in 16S rRNA + S-adenosyl-L-methionine = 5-methylcytidine(1407) in 16S rRNA + S-adenosyl-L-homocysteine + H(+). Specifically methylates the cytosine at position 1407 (m5C1407) of 16S rRNA. This Enterobacter sp. (strain 638) protein is Ribosomal RNA small subunit methyltransferase F.